The following is a 438-amino-acid chain: tRNA modification GTPase MnmE (438 aa).

Residues Arg-19, Glu-76, and Lys-115 each coordinate (6S)-5-formyl-5,6,7,8-tetrahydrofolate. The 153-residue stretch at 211-363 folds into the TrmE-type G domain; that stretch reads GYKVAIIGRP…LSKELESYLN (153 aa). GTP contacts are provided by residues 221–226, 240–246, and 265–268; these read NVGKSS, SETAGTT, and DTAG. 2 residues coordinate Mg(2+): Ser-225 and Thr-246. Lys-438 provides a ligand contact to (6S)-5-formyl-5,6,7,8-tetrahydrofolate.

It belongs to the TRAFAC class TrmE-Era-EngA-EngB-Septin-like GTPase superfamily. TrmE GTPase family. As to quaternary structure, homodimer. Heterotetramer of two MnmE and two MnmG subunits. K(+) is required as a cofactor.

It localises to the cytoplasm. Its function is as follows. Exhibits a very high intrinsic GTPase hydrolysis rate. Involved in the addition of a carboxymethylaminomethyl (cmnm) group at the wobble position (U34) of certain tRNAs, forming tRNA-cmnm(5)s(2)U34. The chain is tRNA modification GTPase MnmE from Campylobacter fetus subsp. fetus (strain 82-40).